A 776-amino-acid polypeptide reads, in one-letter code: Cullin-1 (776 aa).

Arginine 63 is subject to Omega-N-methylarginine. Residues 706-766 form the Cullin neddylation domain; the sequence is DRKLLIQAAI…IEKEYLERVD (61 aa). Residue lysine 720 forms a Glycyl lysine isopeptide (Lys-Gly) (interchain with G-Cter in NEDD8) linkage.

It belongs to the cullin family. In terms of assembly, component of multiple Cul1-RING E3 ubiquitin-protein ligase complexes commonly known as SCF (SKP1-CUL1-F-box) complexes, consisting of CUL1, SKP1, RBX1 and a variable F-box domain-containing protein as substrate-specific subunit. Component of the SCF(FBXW11) complex containing FBXW11. Component of the SCF(SKP2) complex containing SKP2, in which it interacts directly with SKP1, SKP2 and RBX1. Component of the SCF(FBXW2) complex containing FBXW2. Component of the SCF(FBXO32) complex containing FBXO32. Component of the probable SCF(FBXO7) complex containing FBXO7. Component of the SCF(FBXO10) complex containing FBXO10. Component of the SCF(FBXO11) complex containing FBXO11. Component of the SCF(FBXO25) complex containing FBXO25. Component of the SCF(FBXO33) complex containing FBXO33. Component of the probable SCF(FBXO4) complex containing FBXO4. Component of the SCF(FBXO44) complex, composed of SKP1, CUL1 and FBXO44. Component of the SCF(BTRC) complex, composed of SKP1, CUL1 and BTRC. This complex binds phosphorylated NFKBIA. Part of a SCF complex consisting of CUL1, RBX1, SKP1 and FBXO2. Component of a SCF(SKP2)-like complex containing CUL1, SKP1, TRIM21 and SKP2. Component of the SCF(FBXO17) complex, composed of SKP1, CUL1 and FBXO17. Component of the SCF(FBXO27) complex, composed of SKP1, CUL1 and FBXO27. Component of the SCF(CCNF) complex consisting of CUL1, RBX1, SKP1 and CCNF. Interacts with CCNF. Component of the SCF(FBXL3) complex composed of CUL1, SKP1, RBX1 and FBXL3. Component of the SCF(FBXL21) complex composed of CUL1, SKP1, RBX1 and FBXL21. Component of the SCF(FBXO9) composed of CUL1, SKP1, RBX1 and FBXO9. Component of the SCF(FBXW7) composed of CUL1, SKP1, RBX1 and FBXW7. Component of the SCF(FBXO31) complex composed of CUL1, SKP1, RBX1 and FBXO31. Interacts with CHEK2; mediates CHEK2 ubiquitination and regulates its function. Part of a complex with TIP120A/CAND1 and RBX1. The unneddylated form interacts with TIP120A/CAND1 and the interaction mediates the exchange of the F-box substrate-specific subunit. Can self-associate. Interacts with FBXW8. Interacts with RNF7. Interacts with TRIM21. Interacts with COPS2. Interacts with DCUN1D1 and UBE2M. Interacts with DCUN1D3. Interacts with DCUN1D4. Identified in a complex with RBX1 and GLMN. Interacts with CEP68 as part of the SCF(FBXW11) complex; the interaction is probably mediated by FBXW11 and the complex also contains CDK5RAP2 and PCNT. Interacts (when neddylated) with ARIH1; leading to activate the E3 ligase activity of ARIH1. Interacts with COPS9. Interacts with UBXN1. Interacts with KAT7, probably as part of an SCF complex; the interaction mediates KAT7 ubiquitination. Interacts with NOTCH2. Part of a complex that contains DCUN1D5, CUL1 and RBX1; this interaction is bridged by CUL1. Interacts (unneddylated form) with DCUN1D1, DCUN1D2, DCUN1D3, DCUN1D4 and DCUN1D5; these interactions promote the cullin neddylation. Interacts (via the C-terminal domain) with CUL7; the interaction seems to be mediated by FBXW8; it is likely specific to FBXW8, but not other F-box proteins. Interacts with UBR2, as part of SCF(BTRC) complex; the interaction mediates 'Lys-48'-linked ubiquitination of UBR2 and is regulated by DUSP22 in the T-cell receptor signaling pathway. As to quaternary structure, (Microbial infection) Interacts with murine cytomegalovirus M48. In terms of processing, neddylated; which enhances the ubiquitination activity of SCF. Neddylation prevents binding of the inhibitor CAND1. Neddylation leads to structural rearrangment in the complex that allows interaction between the E2 ubiquitin-conjugating enzyme and the acceptor ubiquitin. Deneddylated via its interaction with the COP9 signalosome (CSN) complex. (Microbial infection) Deneddylated by murine cytomegalovirus M48 leading to a S-phase-like environment that is required for efficient replication of the viral genome. Embryo fibroblasts and embryo preadipocytes.

It participates in protein modification; protein ubiquitination. In terms of biological role, core component of multiple cullin-RING-based SCF (SKP1-CUL1-F-box protein) E3 ubiquitin-protein ligase complexes, which mediate the ubiquitination of proteins involved in cell cycle progression, signal transduction and transcription. SCF complexes and ARIH1 collaborate in tandem to mediate ubiquitination of target proteins. In the SCF complex, serves as a rigid scaffold that organizes the SKP1-F-box protein and RBX1 subunits. May contribute to catalysis through positioning of the substrate and the ubiquitin-conjugating enzyme. The E3 ubiquitin-protein ligase activity of the complex is dependent on the neddylation of the cullin subunit and exchange of the substrate recognition component is mediated by TIP120A/CAND1. The functional specificity of the SCF complex depends on the F-box protein as substrate recognition component. SCF(BTRC) and SCF(FBXW11) direct ubiquitination of CTNNB1 and participate in Wnt signaling. SCF(FBXW11) directs ubiquitination of phosphorylated NFKBIA. SCF(BTRC) directs ubiquitination of NFKBIB, NFKBIE, ATF4, SMAD3, SMAD4, CDC25A, FBXO5 and probably NFKB2. SCF(BTRC) and/or SCF(FBXW11) direct ubiquitination of CEP68. SCF(SKP2) directs ubiquitination of phosphorylated CDKN1B/p27kip and is involved in regulation of G1/S transition. SCF(SKP2) directs ubiquitination of ORC1, CDT1, RBL2, ELF4, CDKN1A, RAG2, FOXO1A, and probably MYC and TAL1. SCF(FBXW7) directs ubiquitination of cyclin E, NOTCH1 released notch intracellular domain (NICD), and probably PSEN1. SCF(FBXW2) directs ubiquitination of GCM1. SCF(FBXO32) directs ubiquitination of MYOD1. SCF(FBXO7) directs ubiquitination of BIRC2 and DLGAP5. SCF(FBXO33) directs ubiquitination of YBX1. SCF(FBXO1) directs ubiquitination of BCL6 and DTL but does not seem to direct ubiquitination of TP53. SCF(BTRC) mediates the ubiquitination of NFKBIA at 'Lys-21' and 'Lys-22'; the degradation frees the associated NFKB1-RELA dimer to translocate into the nucleus and to activate transcription. SCF(CCNF) directs ubiquitination of CCP110. SCF(FBXL3) and SCF(FBXL21) direct ubiquitination of CRY1 and CRY2. SCF(FBXO9) directs ubiquitination of TTI1 and TELO2. SCF(FBXO10) directs ubiquitination of BCL2. Neddylated CUL1-RBX1 ubiquitinates p53/TP53 recruited by Cul7-RING(FBXW8) complex. SCF(BTRC) directs 'Lys-48'-linked ubiquitination of UBR2 in the T-cell receptor signaling pathway. The SCF(FBXO31) protein ligase complex specifically mediates the ubiquitination of proteins amidated at their C-terminus in response to oxidative stress. The protein is Cullin-1 (Cul1) of Mus musculus (Mouse).